The following is a 285-amino-acid chain: Small ribosomal subunit protein uS2 (285 aa).

The interval 229–285 (AGLASGDAKPEAGAGEPLAEWEQELLAQANPNAEGSAEAAPAAATEEAPAAQTPADF) is disordered. The span at 257-285 (ANPNAEGSAEAAPAAATEEAPAAQTPADF) shows a compositional bias: low complexity.

This sequence belongs to the universal ribosomal protein uS2 family.

The polypeptide is Small ribosomal subunit protein uS2 (Nocardia farcinica (strain IFM 10152)).